The sequence spans 614 residues: DBH-like monooxygenase protein 1 homolog (614 aa).

The signal sequence occupies residues 1–22 (MSENKLFCAIVFLTSLFCSTCS). At 23–593 (QGTRFVHSAA…CRKDSAIQCE (571 aa)) the chain is on the lumenal side. A DOMON domain is found at 37–150 (RRYNIKWGFD…STVRVIWAFH (114 aa)). Asn116 carries N-linked (GlcNAc...) asparagine glycosylation. Tyr205 is an active-site residue. Disulfide bonds link Cys207-Cys259 and Cys244-Cys271. Cu cation contacts are provided by His237 and His238. Asn249 carries an N-linked (GlcNAc...) asparagine glycan. Cu cation contacts are provided by His309, His391, and His393. Intrachain disulfides connect Cys366-Cys482, Cys370-Cys552, and Cys445-Cys467. His391 is a catalytic residue. The N-linked (GlcNAc...) asparagine glycan is linked to Asn454. Cu cation is bound at residue Met466. Residue Asn519 is glycosylated (N-linked (GlcNAc...) asparagine). A helical membrane pass occupies residues 594-612 (HSLALLLTACLLLILQTCL).

Belongs to the copper type II ascorbate-dependent monooxygenase family. It depends on Cu(2+) as a cofactor.

It localises to the endoplasmic reticulum membrane. This chain is DBH-like monooxygenase protein 1 homolog (moxd1), found in Danio rerio (Zebrafish).